The sequence spans 328 residues: MADLLNVLKDKLSGKNVKIVLPEGEDERVLTAATQLQATDYVTPIVLGDETKVQSLAQKLNLDISNIELINPATSELKAELVQSFVERRKGKTTEEQAQELLNNVNYFGTMLVYAGKADGLVSGAAHSTGDTVRPALQIIKTKPGVSRTSGIFFMIKGDEQYIFGDCAINPELDSQGLAEIAVESAKSALSFGMDPKVAMLSFSTKGSAKSDDVTKVQEAVKLAQQKAEEEKLEAIIDGEFQFDAAIVPGVAEKKAPGAKLQGDANVFVFPSLEAGNIGYKIAQRLGGYDAVGPVLQGLNSPVNDLSRGCSIEDVYNLSFITAAQALQ.

This sequence belongs to the phosphate acetyltransferase and butyryltransferase family.

It localises to the cytoplasm. It carries out the reaction acetyl-CoA + phosphate = acetyl phosphate + CoA. It participates in metabolic intermediate biosynthesis; acetyl-CoA biosynthesis; acetyl-CoA from acetate: step 2/2. The protein is Phosphate acetyltransferase (pta) of Staphylococcus aureus (strain MRSA252).